The following is a 1345-amino-acid chain: Membrane-anchored lipid-binding protein LAM4 (1345 aa).

The Cytoplasmic segment spans residues 1 to 1197; that stretch reads MTRDSKKKHH…NFSSEIFMNK (1197 aa). 7 disordered regions span residues 51–80, 115–134, 139–164, 190–302, 356–397, 425–447, and 489–531; these read RVGG…KAAA, SLKG…PSLS, EKEK…DGHD, DADN…SLDD, LPEA…KPRR, SFNS…PREM, and STII…NGRQ. Thr66 bears the Phosphothreonine mark. Over residues 216–228 the composition is skewed to low complexity; the sequence is SENSTNNKNTSST. The span at 246-271 shows a compositional bias: polar residues; sequence SKSSTPSNQQLNTTEAGSKSKPSSLS. Over residues 283–294 the composition is skewed to low complexity; the sequence is HSNSHSSSNAIS. The span at 425-436 shows a compositional bias: polar residues; it reads SFNSSNGLTNND. Positions 498-516 are enriched in low complexity; sequence SNGRPSSGLRRSSSKSFSS. The GRAM domain maps to 549-616; it reads EFHAIFKDSG…FKTIVQIEKR (68 aa). The span at 665–677 shows a compositional bias: low complexity; sequence SNSNNTNSSSNSI. The tract at residues 665–722 is disordered; the sequence is SNSNNTNSSSNSISDDENDDYDDDYDDYGDDDDDLYDNSNNISDSTDMTSSVSIGKPE. Over residues 678-700 the composition is skewed to acidic residues; the sequence is SDDENDDYDDDYDDYGDDDDDLY. Residue Ser747 is modified to Phosphoserine. 2 VASt domains span residues 758–930 and 967–1139; these read NEKL…TRSA and DDSI…SRAK. A disordered region spans residues 930-963; it reads ATKRKRSSKENTVTVSTLPKMEPSSHAPTEPDIQ. The segment covering 1141 to 1158 has biased composition (basic residues); that stretch reads KKPVKKVMKSHDKHRPFH. A disordered region spans residues 1141-1172; sequence KKPVKKVMKSHDKHRPFHSKVEQKSSESRKSD. Basic and acidic residues predominate over residues 1159–1172; that stretch reads SKVEQKSSESRKSD. The helical transmembrane segment at 1198 to 1218 threads the bilayer; sequence LLSPQKLFLILGLTIMLFWSP. At 1219–1345 the chain is on the lumenal side; the sequence is RLHVFQEKNN…NIERDANDLS (127 aa).

This sequence belongs to the YSP2 family.

Its subcellular location is the endoplasmic reticulum membrane. Its function is as follows. May be involved in sterol transfer between intracellular membranes. The protein is Membrane-anchored lipid-binding protein LAM4 of Saccharomyces cerevisiae (strain ATCC 204508 / S288c) (Baker's yeast).